A 1405-amino-acid chain; its full sequence is DNA-directed RNA polymerase subunit beta' (1405 aa).

Residues C70, C72, C85, and C88 each contribute to the Zn(2+) site. Mg(2+) contacts are provided by D460, D462, and D464. Residues C814, C888, C895, and C898 each contribute to the Zn(2+) site.

Belongs to the RNA polymerase beta' chain family. As to quaternary structure, the RNAP catalytic core consists of 2 alpha, 1 beta, 1 beta' and 1 omega subunit. When a sigma factor is associated with the core the holoenzyme is formed, which can initiate transcription. Requires Mg(2+) as cofactor. Zn(2+) is required as a cofactor.

It catalyses the reaction RNA(n) + a ribonucleoside 5'-triphosphate = RNA(n+1) + diphosphate. DNA-dependent RNA polymerase catalyzes the transcription of DNA into RNA using the four ribonucleoside triphosphates as substrates. In Shewanella putrefaciens (strain CN-32 / ATCC BAA-453), this protein is DNA-directed RNA polymerase subunit beta'.